Consider the following 330-residue polypeptide: AH receptor-interacting protein (330 aa).

Ser-43 carries the post-translational modification Phosphoserine. The PPIase FKBP-type domain occupies 54 to 146 (RVRGKPMELI…DLDALQQNPQ (93 aa)). TPR repeat units lie at residues 179-212 (VPLIHQEGNRLYREGHVKEAAAKYYDAIACLKNL), 231-264 (TPLLLNYCQCKLVAEEYYEVLDHCSSILNKYDDN), and 265-298 (VKAYFKRGKAHAAVWNAQEAQADFAKVLELDPAL).

As to quaternary structure, interacts with RET in the pituitary gland; this interaction prevents the formation of the AIP-survivin complex.

It is found in the cytoplasm. Its function is as follows. May play a positive role in AHR-mediated (aromatic hydrocarbon receptor) signaling, possibly by influencing its receptivity for ligand and/or its nuclear targeting. Functionally, cellular negative regulator of the hepatitis B virus (HBV) X protein. This chain is AH receptor-interacting protein (AIP), found in Chlorocebus aethiops (Green monkey).